Here is a 533-residue protein sequence, read N- to C-terminus: uncharacterized protein (533 aa).

A run of 5 helical transmembrane segments spans residues 4–23 (FLAA…GLAI), 28–47 (VFGL…VVST), 57–79 (IVYQ…PAFF), 86–108 (GWKL…WVLI), and 151–173 (VIGY…AVGA). In terms of domain architecture, RCK C-terminal spans 263 to 347 (LGEERETKIE…VAEVRRFLGD (85 aa)). A run of 4 helical transmembrane segments spans residues 352–374 (LADV…GAIP), 379–401 (GGTT…LGAL), 422–444 (LGLA…AALT), and 454–476 (GGLV…VLRL).

It belongs to the AAE transporter (TC 2.A.81) family.

The protein resides in the cell membrane. This is an uncharacterized protein from Corynebacterium glutamicum (strain ATCC 13032 / DSM 20300 / JCM 1318 / BCRC 11384 / CCUG 27702 / LMG 3730 / NBRC 12168 / NCIMB 10025 / NRRL B-2784 / 534).